Here is a 315-residue protein sequence, read N- to C-terminus: Tryptophan prenyltransferase ComQ (315 aa).

2 residues coordinate Mg(2+): D95 and D99.

The protein belongs to the FPP/GGPP synthase family. Mg(2+) is required as a cofactor.

Its subcellular location is the cell membrane. It catalyses the reaction L-tryptophyl-[protein] + (2E,6E)-farnesyl diphosphate = (2S,3R)-3-farnesyl-2,3-dihydro-2,N(alpha)-cyclo-L-tryptophyl-[protein] + diphosphate. Its function is as follows. Part of a major quorum-sensing system that regulates the development of genetic competence. Involved in the maturation of the competence pheromone ComX. Acts by catalyzing the transfer of a farnesyl group on the ComX pheromone. In vitro, can also catalyze the farnesylation of single tryptophan and tryptophan derivatives. The chain is Tryptophan prenyltransferase ComQ from Bacillus subtilis subsp. natto (strain BEST195).